The chain runs to 344 residues: MASATTHFQPKNVPFRFLGRSGLKVSAFSLGGWLTYGNEGYDVEHTKNCLKQAWDLGINTFDTAEIYSNGNSETVMGKAIKELGWDRSEYVITTKVFFGAGTKLPNTTGLSRKHIIEGLNASLKRLGLPYVDVIMAHRPDPSVPMEEVVRAFTQLIQDGKAFYWGTSEWSAFEIEHAHHIATKYNLIAPVADQPQYNYLTRDHFEKDLLPLQQIYGYGATVWSPLKSGILTGKYNDGIPEGSRLSTTFTSLAGQLQTPEGKTQLDQVRQISKIAEQIGATPSQLALAWTLKNPYVSTTILGASKPEQIVENVKAVEFIDKLTPEILKKIDEILNFTPLEIQYRR.

Positions 33, 62, 67, 167, 193, 222, 223, 224, 225, 233, 243, 301, 303, 307, 310, and 311 each coordinate NADP(+). Tyr67 serves as the catalytic Proton donor/acceptor.

This sequence belongs to the shaker potassium channel beta subunit family. In terms of assembly, forms heteromultimeric complexes with potassium channel alpha subunits.

The protein localises to the cytoplasm. It is found in the nucleus. Functionally, probable accessory potassium channel protein which modulates the activity of the pore-forming alpha subunit. The polypeptide is Putative voltage-gated potassium channel subunit beta (Schizosaccharomyces pombe (strain 972 / ATCC 24843) (Fission yeast)).